Here is a 122-residue protein sequence, read N- to C-terminus: Large ribosomal subunit protein uL14 (122 aa).

Belongs to the universal ribosomal protein uL14 family. In terms of assembly, part of the 50S ribosomal subunit. Forms a cluster with proteins L3 and L19. In the 70S ribosome, L14 and L19 interact and together make contacts with the 16S rRNA in bridges B5 and B8.

Functionally, binds to 23S rRNA. Forms part of two intersubunit bridges in the 70S ribosome. This Enterococcus faecalis (strain ATCC 700802 / V583) protein is Large ribosomal subunit protein uL14.